A 616-amino-acid polypeptide reads, in one-letter code: GPI mannosyltransferase 3 (616 aa).

Residues 1–16 (MAHEVHRIKPKLGRTQ) lie on the Cytoplasmic side of the membrane. A helical transmembrane segment spans residues 17 to 37 (IFWVFLAFRVLNAVLTRTFFQ). The Lumenal portion of the chain corresponds to 38–86 (ADEFWQALEPAHWKAFKYGELTWEWKFGVRSYLFPMIFELTYRLVSLSS). The helical transmembrane segment at 87-107 (ILLHYALLLLSTIGSDLLILL) threads the bilayer. The Cytoplasmic portion of the chain corresponds to 108 to 136 (LPKYELSWQVAEDLKRLPFDVTRSFEYYG). The helical transmembrane segment at 137–157 (VIYAPKIVMAVLASIGEYYIV) threads the bilayer. Residues 158 to 188 (RFVQKLYLLTLDKRNEKEEEERRSGLSEITK) are Lumenal-facing. Residues 189 to 209 (FALLLSLTNFFNCFFITRTFI) form a helical membrane-spanning segment. The Cytoplasmic portion of the chain corresponds to 210–240 (NSFEMILTSIALYYWDWTGGQMIKESSFTKS). Residues 241–261 (LIFAFLACLQRPSSGLIWVIP) traverse the membrane as a helical segment. Topologically, residues 262–278 (SISLILNLVGKKQYHLL) are lumenal. Residues 279–299 (FITFSKVLRSFFLVFTANAII) traverse the membrane as a helical segment. The Cytoplasmic portion of the chain corresponds to 300 to 338 (DMYFYEKVTFPFFRFLKFNFTTPLSKFYGVAPWHFHFFQ). The chain crosses the membrane as a helical span at residues 339 to 359 (SLPIVLGASIPAFAFGLFFPL). Residues 360–392 (SKRSFPKKYLNPFFQVKLTILLNLLVYSTLPHK) are Lumenal-facing. Residues 393–413 (EFRFIFPLQPLFILISSFGLL) traverse the membrane as a helical segment. Over 414–423 (RLDRDYWKRL) the chain is Cytoplasmic. The helical transmembrane segment at 424–444 (SGLKSLLWLVPFVSVFIALLL) threads the bilayer. Over 445–616 (DTFHESGSIE…DYSDIPAADI (172 aa)) the chain is Lumenal.

This sequence belongs to the glycosyltransferase 22 family. PIGB subfamily.

The protein localises to the endoplasmic reticulum membrane. The protein operates within glycolipid biosynthesis; glycosylphosphatidylinositol-anchor biosynthesis. Mannosyltransferase involved in glycosylphosphatidylinositol-anchor biosynthesis. Transfers the third mannose to Man2-GlcN-acyl-PI during GPI precursor assembly. In Saccharomyces cerevisiae (strain ATCC 204508 / S288c) (Baker's yeast), this protein is GPI mannosyltransferase 3 (GPI10).